We begin with the raw amino-acid sequence, 173 residues long: Putative metal-dependent hydrolase BA_2700/GBAA_2700/BAS2515 (173 aa).

Positions 65, 156, and 160 each coordinate Zn(2+).

Belongs to the metal hydrolase YfiT family. Homodimer. The cofactor is Zn(2+).

The protein resides in the cytoplasm. Its function is as follows. Possible metal-dependent hydrolase. This Bacillus anthracis protein is Putative metal-dependent hydrolase BA_2700/GBAA_2700/BAS2515.